The following is a 752-amino-acid chain: Catalase-peroxidase (752 aa).

The tract at residues 1–21 is disordered; it reads MSNESKCPFHQTAGGGTTNRD. The tryptophyl-tyrosyl-methioninium (Trp-Tyr) (with M-271) cross-link spans 91-245; sequence WHSAGTYRIG…LAAVQMGLIY (155 aa). Residue His92 is the Proton acceptor of the active site. The tract at residues 204–228 is disordered; it reads QAPGQGDLVAEPAKHGEEQNRDLSA. Residues 215–228 are compositionally biased toward basic and acidic residues; that stretch reads PAKHGEEQNRDLSA. A cross-link (tryptophyl-tyrosyl-methioninium (Tyr-Met) (with W-91)) is located at residues 245 to 271; it reads YVNPEGPEGNPDPVASGKDIRETFGRM. His286 is a heme binding site. Residues 366 to 391 form a disordered region; it reads AHQWQPKEGKGAGTVPDAHDPSKRHA.

The protein belongs to the peroxidase family. Peroxidase/catalase subfamily. In terms of assembly, homodimer or homotetramer. It depends on heme b as a cofactor. In terms of processing, formation of the three residue Trp-Tyr-Met cross-link is important for the catalase, but not the peroxidase activity of the enzyme.

It carries out the reaction H2O2 + AH2 = A + 2 H2O. The catalysed reaction is 2 H2O2 = O2 + 2 H2O. In terms of biological role, bifunctional enzyme with both catalase and broad-spectrum peroxidase activity. The chain is Catalase-peroxidase from Pseudomonas putida (strain W619).